The sequence spans 142 residues: MDRITGPFRKSKKSFRKPLPPIQSGDRIDYQNIDLLRRFISQQGKILSRRVTRLTLKQQRLLNLAIKQARILSFLPFTNTESLEKMKARIREARLKAEEVRLKNKEARFKKAKEARNQKKTTFRKIFINPKNSKLNTETNQI.

The interval 1–21 (MDRITGPFRKSKKSFRKPLPP) is disordered.

The protein belongs to the bacterial ribosomal protein bS18 family. In terms of assembly, part of the 30S ribosomal subunit.

The protein localises to the plastid. The sequence is that of Small ribosomal subunit protein bS18c from Cuscuta gronovii (Common dodder).